Here is a 282-residue protein sequence, read N- to C-terminus: Bifunctional protein FolD (282 aa).

NADP(+)-binding positions include 160 to 162 (NRS), Ser-185, and Ile-228.

The protein belongs to the tetrahydrofolate dehydrogenase/cyclohydrolase family. In terms of assembly, homodimer.

It catalyses the reaction (6R)-5,10-methylene-5,6,7,8-tetrahydrofolate + NADP(+) = (6R)-5,10-methenyltetrahydrofolate + NADPH. The enzyme catalyses (6R)-5,10-methenyltetrahydrofolate + H2O = (6R)-10-formyltetrahydrofolate + H(+). The protein operates within one-carbon metabolism; tetrahydrofolate interconversion. In terms of biological role, catalyzes the oxidation of 5,10-methylenetetrahydrofolate to 5,10-methenyltetrahydrofolate and then the hydrolysis of 5,10-methenyltetrahydrofolate to 10-formyltetrahydrofolate. The protein is Bifunctional protein FolD of Cenarchaeum symbiosum (strain A).